A 491-amino-acid chain; its full sequence is UDP-N-acetylmuramate--L-alanine ligase (491 aa).

An ATP-binding site is contributed by 126–132 (GTHGKTT).

Belongs to the MurCDEF family.

The protein localises to the cytoplasm. It carries out the reaction UDP-N-acetyl-alpha-D-muramate + L-alanine + ATP = UDP-N-acetyl-alpha-D-muramoyl-L-alanine + ADP + phosphate + H(+). It participates in cell wall biogenesis; peptidoglycan biosynthesis. Its function is as follows. Cell wall formation. The sequence is that of UDP-N-acetylmuramate--L-alanine ligase from Shigella flexneri serotype 5b (strain 8401).